Reading from the N-terminus, the 85-residue chain is Small ribosomal subunit protein bS18 (85 aa).

The protein belongs to the bacterial ribosomal protein bS18 family. Part of the 30S ribosomal subunit. Forms a tight heterodimer with protein bS6.

Its function is as follows. Binds as a heterodimer with protein bS6 to the central domain of the 16S rRNA, where it helps stabilize the platform of the 30S subunit. The polypeptide is Small ribosomal subunit protein bS18 (Helicobacter acinonychis (strain Sheeba)).